An 813-amino-acid chain; its full sequence is Leucine--tRNA ligase (813 aa).

A 'HIGH' region motif is present at residues 41-51; that stretch reads PYPSGTLHMGH. The 'KMSKS' region signature appears at 575 to 579; it reads KMSKS. An ATP-binding site is contributed by lysine 578.

Belongs to the class-I aminoacyl-tRNA synthetase family.

The protein localises to the cytoplasm. It carries out the reaction tRNA(Leu) + L-leucine + ATP = L-leucyl-tRNA(Leu) + AMP + diphosphate. This chain is Leucine--tRNA ligase, found in Francisella tularensis subsp. tularensis (strain WY96-3418).